A 154-amino-acid chain; its full sequence is Snaclec agglucetin subunit alpha-1 (154 aa).

The N-terminal stretch at 1–23 (MGRFIFVSFGLLVVFLSLSGTGA) is a signal peptide. 3 disulfide bridges follow: C27/C38, C55/C150, and C125/C142. One can recognise a C-type lectin domain in the interval 34–151 (YDQSCYRVFK…CGSEYAFVCK (118 aa)). N-linked (GlcNAc...) asparagine glycosylation is present at N116.

The protein belongs to the snaclec family. In terms of assembly, heterotetramer of the subunits alpha-1, alpha-2, beta-1 and beta-2; disulfide-linked. Expressed by the venom gland.

It is found in the secreted. Agglucetin specifically causes platelet aggregation and surface exposure of integrin alpha-IIb/beta-3 with a GPIb-(GP1BA-) dependent manner in washed platelets. It binds to human platelets in a saturable manner, and its binding is specifically blocked by anti-GP Ib mAb. It regulates endothelial cell survival and promotes angiogenesis by activating integrin alpha-v/beta-3 signaling through FAK/phosphatidylinositol 3-kinase (PI3K)/Akt pathway. The protein is Snaclec agglucetin subunit alpha-1 of Deinagkistrodon acutus (Hundred-pace snake).